The primary structure comprises 65 residues: Gallinacin-1 (65 aa).

Residues 1–19 (MRIVYLLLPFILLLAQGAA) form the signal peptide. Residues 20-25 (GSSQAL) constitute a propeptide that is removed on maturation. Cystine bridges form between Cys-31–Cys-59, Cys-38–Cys-53, and Cys-43–Cys-60.

This sequence belongs to the beta-defensin family. Strong expression in the bone marrow, lung, testis. Moderate expression in the bursa and intestine. Low expression in the cloaca, gall bladder, brain and pancreas. Expressed in the vagina, ovarian stroma and the theca and granulosa layers of the ovarian follicle.

It is found in the secreted. It localises to the cytoplasmic granule. Has bactericidal activity. Potent activity against E.coli ML-35, L.monocytogenes EGD and C.albicans. The chain is Gallinacin-1 (GAL1) from Gallus gallus (Chicken).